Here is a 488-residue protein sequence, read N- to C-terminus: Ribulose bisphosphate carboxylase large chain (488 aa).

Substrate-binding residues include Asn127 and Thr177. Lys179 functions as the Proton acceptor in the catalytic mechanism. A substrate-binding site is contributed by Lys181. Residues Lys205, Asp207, and Glu208 each coordinate Mg(2+). N6-carboxylysine is present on Lys205. The active-site Proton acceptor is the His297. Residues Arg298, His330, and Ser382 each coordinate substrate.

Belongs to the RuBisCO large chain family. Type I subfamily. As to quaternary structure, heterohexadecamer of 8 large chains and 8 small chains. The cofactor is Mg(2+).

The protein localises to the plastid. Its subcellular location is the chloroplast. It catalyses the reaction 2 (2R)-3-phosphoglycerate + 2 H(+) = D-ribulose 1,5-bisphosphate + CO2 + H2O. The enzyme catalyses D-ribulose 1,5-bisphosphate + O2 = 2-phosphoglycolate + (2R)-3-phosphoglycerate + 2 H(+). RuBisCO catalyzes two reactions: the carboxylation of D-ribulose 1,5-bisphosphate, the primary event in carbon dioxide fixation, as well as the oxidative fragmentation of the pentose substrate in the photorespiration process. Both reactions occur simultaneously and in competition at the same active site. This Chrysotila carterae (Marine alga) protein is Ribulose bisphosphate carboxylase large chain.